The following is a 315-amino-acid chain: Transcription repressor OFP7 (315 aa).

The disordered stretch occupies residues 113-183 (YETPRRKIYN…ELPRVTRRPR (71 aa)). Residues 130–145 (RRRLKKKEKSNSRRRG) show a composition bias toward basic residues. The segment covering 160–174 (LPSSTNLSPEYSSSE) has biased composition (polar residues). Residues 230-289 (VVKKSEDPYEDFKGSMMEMIVEKKMFEVAELEQLLSCFLSLNAKRHHRAIVRAFSEIWVA) form the OVATE domain.

In terms of tissue distribution, expressed in roots, shoots, stems, flower buds and siliques.

It localises to the nucleus. In terms of biological role, transcriptional repressor that regulates multiple aspects of plant growth and development through the regulation of BEL1-LIKE (BLH) and KNOX TALE (KNAT) homeodomain transcription factors. This is Transcription repressor OFP7 (OFP7) from Arabidopsis thaliana (Mouse-ear cress).